We begin with the raw amino-acid sequence, 268 residues long: Probable RNA methyltransferase C2A9.10 (268 aa).

The Bin3-type SAM domain occupies 23-258 (DPRLKCLPDS…RTMYIYKKKG (236 aa)).

This sequence belongs to the methyltransferase superfamily.

In terms of biological role, probable RNA methyltransferase. In Schizosaccharomyces pombe (strain 972 / ATCC 24843) (Fission yeast), this protein is Probable RNA methyltransferase C2A9.10.